Here is a 389-residue protein sequence, read N- to C-terminus: S-adenosylmethionine synthase 2 (389 aa).

Residue histidine 17 coordinates ATP. Aspartate 19 lines the Mg(2+) pocket. Position 45 (glutamate 45) interacts with K(+). L-methionine is bound by residues glutamate 58 and glutamine 102. Residues 102 to 112 are flexible loop; sequence QSADIAVGVDA. ATP contacts are provided by residues 166 to 168, 231 to 232, aspartate 240, 246 to 247, alanine 263, and lysine 267; these read DSK, RF, and RK. Aspartate 240 contacts L-methionine. Lysine 271 is an L-methionine binding site.

The protein belongs to the AdoMet synthase family. In terms of assembly, homotetramer; dimer of dimers. The cofactor is Mg(2+). K(+) is required as a cofactor.

The protein resides in the cytoplasm. It carries out the reaction L-methionine + ATP + H2O = S-adenosyl-L-methionine + phosphate + diphosphate. Its pathway is amino-acid biosynthesis; S-adenosyl-L-methionine biosynthesis; S-adenosyl-L-methionine from L-methionine: step 1/1. Catalyzes the formation of S-adenosylmethionine (AdoMet) from methionine and ATP. The overall synthetic reaction is composed of two sequential steps, AdoMet formation and the subsequent tripolyphosphate hydrolysis which occurs prior to release of AdoMet from the enzyme. The polypeptide is S-adenosylmethionine synthase 2 (Rhodospirillum rubrum (strain ATCC 11170 / ATH 1.1.1 / DSM 467 / LMG 4362 / NCIMB 8255 / S1)).